The following is a 237-amino-acid chain: Phosphoserine phosphatase (237 aa).

The active-site Nucleophile is the aspartate 30. Mg(2+)-binding residues include aspartate 30 and aspartate 32. Residue aspartate 32 is the Proton donor of the active site. Substrate contacts are provided by residues glutamate 39, arginine 76, 120-121 (SG), and lysine 169. Aspartate 192 provides a ligand contact to Mg(2+). Residue asparagine 195 participates in substrate binding.

Belongs to the HAD-like hydrolase superfamily. SerB family. Mg(2+) is required as a cofactor.

The catalysed reaction is O-phospho-L-serine + H2O = L-serine + phosphate. It catalyses the reaction O-phospho-D-serine + H2O = D-serine + phosphate. The protein operates within amino-acid biosynthesis; L-serine biosynthesis; L-serine from 3-phospho-D-glycerate: step 3/3. Catalyzes the dephosphorylation of phosphoserine (P-Ser) in vitro. Also catalyzes the dephosphorylation of phosphothreonine (P-Thr) in vitro. The sequence is that of Phosphoserine phosphatase from Albidiferax ferrireducens (strain ATCC BAA-621 / DSM 15236 / T118) (Rhodoferax ferrireducens).